Consider the following 478-residue polypeptide: Lysosome membrane protein 2 (478 aa).

Over 1-4 (MGRC) the chain is Cytoplasmic. The chain crosses the membrane as a helical span at residues 5 to 27 (CFYTAGTLSLLLLVTSVTLLVAR). At 28–433 (VFQKAVDQSI…RLKSMINTTL (406 aa)) the chain is on the lumenal side. Asn45, Asn68, and Asn105 each carry an N-linked (GlcNAc...) asparagine glycan. Residues 155–191 (IIEAMLKAYQQKLFVTHTVDELLWGYKDEILSLIHVF) are important for interaction with GBA1. Residues Asn206, Asn224, Asn249, and Asn304 are each glycosylated (N-linked (GlcNAc...) asparagine). 2 cysteine pairs are disulfide-bonded: Cys274/Cys329 and Cys312/Cys318. N-linked (GlcNAc...) asparagine glycans are attached at residues Asn325, Asn412, and Asn430. Residues 434 to 459 (IITNIPYIIMALGVFFGLVFTWLACK) traverse the membrane as a helical segment. Residues 460 to 478 (GQGSMDEGTADERAPLIRT) are Cytoplasmic-facing.

Belongs to the CD36 family. In terms of assembly, interacts with GBA1. (Microbial infection) Interacts with enterovirus 71 capsid proteins VP1 and VP2.

The protein resides in the lysosome membrane. Acts as a lysosomal receptor for glucosylceramidase (GBA1) targeting. Functionally, (Microbial infection) Acts as a receptor for enterovirus 71. The protein is Lysosome membrane protein 2 (SCARB2) of Homo sapiens (Human).